We begin with the raw amino-acid sequence, 96 residues long: MSRSIKKGPFVAERLEAKVVTMNAKSEKKVVKTWSRASTILPEFVGHTFAVHNGNKFIPVYVTENMVGHKLGEFSPTRLFRGHAGQKADVKKKGGK.

This sequence belongs to the universal ribosomal protein uS19 family.

Its function is as follows. Protein S19 forms a complex with S13 that binds strongly to the 16S ribosomal RNA. The polypeptide is Small ribosomal subunit protein uS19 (Gemmatimonas aurantiaca (strain DSM 14586 / JCM 11422 / NBRC 100505 / T-27)).